The primary structure comprises 416 residues: L-threonine dehydratase biosynthetic IlvA (416 aa).

Lysine 51 is modified (N6-(pyridoxal phosphate)lysine). Residues asparagine 78, glycine 184–leucine 188, and serine 309 contribute to the pyridoxal 5'-phosphate site. Residues histidine 333–glycine 407 enclose the ACT-like domain.

The protein belongs to the serine/threonine dehydratase family. Homotetramer. Pyridoxal 5'-phosphate is required as a cofactor.

It carries out the reaction L-threonine = 2-oxobutanoate + NH4(+). The protein operates within amino-acid biosynthesis; L-isoleucine biosynthesis; 2-oxobutanoate from L-threonine: step 1/1. In terms of biological role, catalyzes the anaerobic formation of alpha-ketobutyrate and ammonia from threonine in a two-step reaction. The first step involved a dehydration of threonine and a production of enamine intermediates (aminocrotonate), which tautomerizes to its imine form (iminobutyrate). Both intermediates are unstable and short-lived. The second step is the nonenzymatic hydrolysis of the enamine/imine intermediates to form 2-ketobutyrate and free ammonia. In the low water environment of the cell, the second step is accelerated by RidA. In Lactococcus lactis subsp. lactis (strain IL1403) (Streptococcus lactis), this protein is L-threonine dehydratase biosynthetic IlvA (ilvA).